A 418-amino-acid chain; its full sequence is Putative ion-transport protein YfeO (418 aa).

12 helical membrane passes run 10–30, 54–74, 99–119, 120–140, 149–169, 186–206, 223–243, 258–278, 300–320, 322–342, 343–363, and 371–391; these read LLLS…LIVV, DSPF…GLVI, ALPG…SLGP, EHPI…RLLP, ILAS…AALI, LFAP…FFHP, ILSG…AVWC, VLML…AGPV, DYFL…ASGF, GGRI…LHEH, VPAV…VLVV, and LFMA…CIVM.

It belongs to the chloride channel (TC 2.A.49) family.

Its subcellular location is the cell membrane. The polypeptide is Putative ion-transport protein YfeO (Escherichia coli O7:K1 (strain IAI39 / ExPEC)).